The primary structure comprises 195 residues: NAD(P)H-quinone oxidoreductase subunit J, chloroplastic (195 aa).

The protein belongs to the complex I 30 kDa subunit family. As to quaternary structure, NDH is composed of at least 16 different subunits, 5 of which are encoded in the nucleus.

The protein resides in the plastid. Its subcellular location is the chloroplast thylakoid membrane. It carries out the reaction a plastoquinone + NADH + (n+1) H(+)(in) = a plastoquinol + NAD(+) + n H(+)(out). It catalyses the reaction a plastoquinone + NADPH + (n+1) H(+)(in) = a plastoquinol + NADP(+) + n H(+)(out). In terms of biological role, NDH shuttles electrons from NAD(P)H:plastoquinone, via FMN and iron-sulfur (Fe-S) centers, to quinones in the photosynthetic chain and possibly in a chloroplast respiratory chain. The immediate electron acceptor for the enzyme in this species is believed to be plastoquinone. Couples the redox reaction to proton translocation, and thus conserves the redox energy in a proton gradient. The sequence is that of NAD(P)H-quinone oxidoreductase subunit J, chloroplastic from Chlorokybus atmophyticus (Soil alga).